Consider the following 256-residue polypeptide: Acetylglutamate kinase (256 aa).

Substrate is bound by residues 40 to 41 (GG), R62, and N154.

This sequence belongs to the acetylglutamate kinase family. ArgB subfamily.

Its subcellular location is the cytoplasm. The enzyme catalyses N-acetyl-L-glutamate + ATP = N-acetyl-L-glutamyl 5-phosphate + ADP. It functions in the pathway amino-acid biosynthesis; L-arginine biosynthesis; N(2)-acetyl-L-ornithine from L-glutamate: step 2/4. Catalyzes the ATP-dependent phosphorylation of N-acetyl-L-glutamate. The sequence is that of Acetylglutamate kinase from Staphylococcus aureus (strain bovine RF122 / ET3-1).